Reading from the N-terminus, the 395-residue chain is Elongation factor Tu (395 aa).

The region spanning 10-204 is the tr-type G domain; the sequence is KPHVNIGTIG…EVDAYIPTPE (195 aa). The interval 19-26 is G1; it reads GHVDHGKT. Position 19–26 (19–26) interacts with GTP; it reads GHVDHGKT. Threonine 26 contacts Mg(2+). The interval 60–64 is G2; the sequence is GITIS. Residues 81 to 84 form a G3 region; that stretch reads DCPG. GTP is bound by residues 81–85 and 136–139; these read DCPGH and NKCD. The tract at residues 136 to 139 is G4; the sequence is NKCD. A G5 region spans residues 174-176; it reads SAL.

Belongs to the TRAFAC class translation factor GTPase superfamily. Classic translation factor GTPase family. EF-Tu/EF-1A subfamily. As to quaternary structure, monomer.

It localises to the cytoplasm. The enzyme catalyses GTP + H2O = GDP + phosphate + H(+). GTP hydrolase that promotes the GTP-dependent binding of aminoacyl-tRNA to the A-site of ribosomes during protein biosynthesis. The protein is Elongation factor Tu of Bacillus anthracis (strain A0248).